The primary structure comprises 475 residues: Aminodeoxychorismate synthase component 1 (475 aa).

This sequence belongs to the anthranilate synthase component I family. Monomer. Heterodimer consisting of two non-identical subunits: a glutamine amidotransferase subunit (PabA) and a aminodeoxychorismate synthase subunit (PabB). It depends on Mg(2+) as a cofactor.

The catalysed reaction is chorismate + L-glutamine = 4-amino-4-deoxychorismate + L-glutamate. It functions in the pathway cofactor biosynthesis; tetrahydrofolate biosynthesis; 4-aminobenzoate from chorismate: step 1/2. Functionally, part of a heterodimeric complex that catalyzes the two-step biosynthesis of 4-amino-4-deoxychorismate (ADC), a precursor of p-aminobenzoate (PABA) and tetrahydrofolate. In the first step, a glutamine amidotransferase (PabA) generates ammonia as a substrate that, along with chorismate, is used in the second step, catalyzed by aminodeoxychorismate synthase (PabB) to produce ADC. This chain is Aminodeoxychorismate synthase component 1 (pabB), found in Streptomyces lividans.